The chain runs to 505 residues: Protein disulfide-isomerase A3 (505 aa).

The signal sequence occupies residues 1–24 (MRLRRLALFPGVALLLAAARLAAA). Residues 25–133 (SDVLELTDDN…IVSHLKKQAG (109 aa)) enclose the Thioredoxin 1 domain. Catalysis depends on nucleophile residues Cys57 and Cys60. An intrachain disulfide couples Cys57 to Cys60. Lys61 bears the N6-methyllysine mark. Residues Cys85 and Cys92 are joined by a disulfide bond. Lys129 carries the N6-succinyllysine modification. Lys152 carries the N6-acetyllysine modification. N6-succinyllysine is present on Lys218. An N6-acetyllysine modification is found at Lys252. Residue Thr319 is modified to Phosphothreonine. Positions 343–485 (SRDGKALERF…FISYLQREAT (143 aa)) constitute a Thioredoxin 2 domain. Position 362 is an N6-acetyllysine (Lys362). Residues Cys406 and Cys409 each act as nucleophile in the active site. Cysteines 406 and 409 form a disulfide. Positions 484-505 (ATNPPVIQEEKPKKKKKAQEDL) are disordered. Positions 491 to 505 (QEEKPKKKKKAQEDL) are enriched in basic and acidic residues. Position 494 is an N6-acetyllysine (Lys494). Positions 502 to 505 (QEDL) match the Prevents secretion from ER motif.

Part of the major histocompatibility complex class I (MHC I) peptide loading complex composed of TAP1, TAP2, B2M, MHC heavy chain, TAPBP, PDIA3, and CALR. Interacts with ERP27 and CANX. Interacts with SERPINA2 and with the S and Z variants of SERPINA1. Interacts with ATP2A2. Within the major histocompatibility complex class I (MHC I) peptide loading complex forms reversible disulfide-linked heterodimers with TAPBP as part of its protein folding chaperone activity. This is essential to assist the dynamic assembly of the MHC I complex with high affinity antigens in the endoplasmic reticulum. In terms of processing, phosphorylated. As to expression, detected in the flagellum and head region of spermatozoa (at protein level). Expressed in liver, stomach and colon (at protein level). Expressed in gastric parietal cells and chief cells (at protein level).

The protein localises to the endoplasmic reticulum. It localises to the endoplasmic reticulum lumen. The protein resides in the melanosome. The catalysed reaction is Catalyzes the rearrangement of -S-S- bonds in proteins.. With respect to regulation, association with calcitriol does not affect its enzymatic activity. In terms of biological role, protein disulfide isomerase that catalyzes the formation, isomerization, and reduction or oxidation of disulfide bonds in client proteins and functions as a protein folding chaperone. Core component of the major histocompatibility complex class I (MHC I) peptide loading complex where it functions as an essential folding chaperone for TAPBP. Through TAPBP, assists the dynamic assembly of the MHC I complex with high affinity antigens in the endoplasmic reticulum. Therefore, plays a crucial role in the presentation of antigens to cytotoxic T cells in adaptive immunity. This is Protein disulfide-isomerase A3 from Homo sapiens (Human).